The primary structure comprises 241 residues: Oil body-associated protein 1B (241 aa).

Over residues 1 to 12 (MEKAVHSSTTSG) the composition is skewed to polar residues. Residues 1–22 (MEKAVHSSTTSGPAVPGETTKT) form a disordered region.

The protein belongs to the OBAP family.

The sequence is that of Oil body-associated protein 1B from Arabidopsis thaliana (Mouse-ear cress).